Consider the following 455-residue polypeptide: Fumarate hydratase class II (455 aa).

Residues 96–98 (SGT), 122–125 (HPND), 132–134 (SSN), and Thr-180 each bind substrate. The Proton donor/acceptor role is filled by His-181. Ser-311 is a catalytic residue. Residues Ser-312 and 317–319 (KVN) contribute to the substrate site.

The protein belongs to the class-II fumarase/aspartase family. Fumarase subfamily. Homotetramer.

The protein resides in the cytoplasm. The enzyme catalyses (S)-malate = fumarate + H2O. It functions in the pathway carbohydrate metabolism; tricarboxylic acid cycle; (S)-malate from fumarate: step 1/1. Functionally, involved in the TCA cycle. Catalyzes the stereospecific interconversion of fumarate to L-malate. The chain is Fumarate hydratase class II from Listeria monocytogenes serovar 1/2a (strain ATCC BAA-679 / EGD-e).